We begin with the raw amino-acid sequence, 458 residues long: Probable beta-eliminating lyase (458 aa).

Lys-257 is modified (N6-(pyridoxal phosphate)lysine).

The protein belongs to the beta-eliminating lyase family. It depends on pyridoxal 5'-phosphate as a cofactor.

In Trichomonas vaginalis (strain ATCC PRA-98 / G3), this protein is Probable beta-eliminating lyase.